The chain runs to 249 residues: MKFYKYCASGNDFVIFADSEKKDRSELAKILCNRYEGIGADGLIVIVPHDRYDFEWEFYNCDGSKANMCGNGSRAAAHFAHHHLKKSQYLNFLTGAGLIKSFVDDDIVEIKLSGIKDIKEAFEYKDRIWQGCNTGVPHIVTFVDDLSEFDINLCKEVRKKYNANVNFAKVEDDEFIRVRTYERGVEDETLACGTGMGACFYLAYLNQKVKDDILIKPKSNESLYFRLEEEQIFFRGKVKCCFEADYNFT.

Positions 11 and 60 each coordinate substrate. C69 serves as the catalytic Proton donor. Substrate contacts are provided by residues 70–71 (GN), N164, and 182–183 (ER). Catalysis depends on C192, which acts as the Proton acceptor. 193–194 (GT) is a binding site for substrate.

Belongs to the diaminopimelate epimerase family. In terms of assembly, homodimer.

It localises to the cytoplasm. The enzyme catalyses (2S,6S)-2,6-diaminopimelate = meso-2,6-diaminopimelate. Its pathway is amino-acid biosynthesis; L-lysine biosynthesis via DAP pathway; DL-2,6-diaminopimelate from LL-2,6-diaminopimelate: step 1/1. Its function is as follows. Catalyzes the stereoinversion of LL-2,6-diaminopimelate (L,L-DAP) to meso-diaminopimelate (meso-DAP), a precursor of L-lysine and an essential component of the bacterial peptidoglycan. The chain is Diaminopimelate epimerase from Campylobacter lari (strain RM2100 / D67 / ATCC BAA-1060).